We begin with the raw amino-acid sequence, 547 residues long: Chaperonin GroEL (547 aa).

ATP contacts are provided by residues T29–P32, K50, D86–T90, G414, N478–A480, and D494.

Belongs to the chaperonin (HSP60) family. In terms of assembly, forms a cylinder of 14 subunits composed of two heptameric rings stacked back-to-back. Interacts with the co-chaperonin GroES.

The protein resides in the cytoplasm. It carries out the reaction ATP + H2O + a folded polypeptide = ADP + phosphate + an unfolded polypeptide.. Functionally, together with its co-chaperonin GroES, plays an essential role in assisting protein folding. The GroEL-GroES system forms a nano-cage that allows encapsulation of the non-native substrate proteins and provides a physical environment optimized to promote and accelerate protein folding. This chain is Chaperonin GroEL, found in Saccharophagus degradans (strain 2-40 / ATCC 43961 / DSM 17024).